The primary structure comprises 221 residues: Retinitis pigmentosa 9 protein (221 aa).

Basic and acidic residues-rich tracts occupy residues Met-1 to Val-10, Arg-17 to Arg-29, and Ile-60 to Asp-69. Positions Met-1–Gly-76 are disordered. The tract at residues Met-1 to Val-155 is PIM1-binding. The segment at Gln-104–Phe-122 adopts a CCHC-type zinc-finger fold. Lys-129 is covalently cross-linked (Glycyl lysine isopeptide (Lys-Gly) (interchain with G-Cter in SUMO2)). Residues Asp-147–Arg-156 are compositionally biased toward basic and acidic residues. Residues Asp-147–Glu-221 are disordered. Positions Lys-184–Ser-212 are enriched in basic residues. Residues Ser-212 and Ser-214 each carry the phosphoserine; by PIM1 modification.

As to quaternary structure, binds to PIM1. Binds to ZNHIT4. As to expression, appears to be expressed in a wide range of tissues.

The protein resides in the nucleus. Functionally, is thought to be a target protein for the PIM1 kinase. May play some roles in B-cell proliferation in association with PIM1. The sequence is that of Retinitis pigmentosa 9 protein (RP9) from Homo sapiens (Human).